A 201-amino-acid polypeptide reads, in one-letter code: 3-isopropylmalate dehydratase small subunit (201 aa).

It belongs to the LeuD family. LeuD type 1 subfamily. Heterodimer of LeuC and LeuD.

It catalyses the reaction (2R,3S)-3-isopropylmalate = (2S)-2-isopropylmalate. It functions in the pathway amino-acid biosynthesis; L-leucine biosynthesis; L-leucine from 3-methyl-2-oxobutanoate: step 2/4. In terms of biological role, catalyzes the isomerization between 2-isopropylmalate and 3-isopropylmalate, via the formation of 2-isopropylmaleate. This is 3-isopropylmalate dehydratase small subunit from Escherichia coli O127:H6 (strain E2348/69 / EPEC).